The primary structure comprises 632 residues: tRNA uridine 5-carboxymethylaminomethyl modification enzyme MnmG (632 aa).

FAD is bound by residues 13-18 (GGGHAG), valine 125, and serine 180. Position 273 to 287 (273 to 287 (GPRYCPSIEDKVMRF)) interacts with NAD(+). FAD is bound at residue glutamine 370.

This sequence belongs to the MnmG family. As to quaternary structure, homodimer. Heterotetramer of two MnmE and two MnmG subunits. It depends on FAD as a cofactor.

Its subcellular location is the cytoplasm. NAD-binding protein involved in the addition of a carboxymethylaminomethyl (cmnm) group at the wobble position (U34) of certain tRNAs, forming tRNA-cmnm(5)s(2)U34. The polypeptide is tRNA uridine 5-carboxymethylaminomethyl modification enzyme MnmG (Vibrio vulnificus (strain CMCP6)).